Consider the following 702-residue polypeptide: Zinc finger CCCH domain-containing protein 62 (702 aa).

Residues Met-1 to Ala-77 are disordered. Over residues Glu-18–Glu-54 the composition is skewed to acidic residues. Residues Leu-132–Ile-166 form the SAP domain. Disordered stretches follow at residues Glu-288–Gln-349, Ser-405–Pro-532, Gly-546–His-602, and Gln-634–Arg-673. A compositionally biased stretch (basic and acidic residues) spans Lys-298–Gly-325. 2 stretches are compositionally biased toward polar residues: residues Gln-326 to Gln-349 and Ser-405 to Ser-419. Positions Gln-430–Gln-448 are enriched in low complexity. Polar residues-rich tracts occupy residues Ser-472–Gly-502, Gln-522–Pro-532, Gly-546–Ser-565, and Pro-575–Gly-591. The C3H1-type zinc-finger motif lies at Phe-674–Arg-702.

This is Zinc finger CCCH domain-containing protein 62 from Oryza sativa subsp. japonica (Rice).